A 1362-amino-acid polypeptide reads, in one-letter code: Mediator of RNA polymerase II transcription subunit 12 (1362 aa).

Positions 31–51 (LRPPDDIHPLVDPARIGDSVY) are disordered.

The protein belongs to the Mediator complex subunit 12 family. Component of the SRB8-11 complex, which itself associates with the Mediator complex.

It localises to the nucleus. Its function is as follows. Component of the SRB8-11 complex. The SRB8-11 complex is a regulatory module of the Mediator complex which is itself involved in regulation of basal and activated RNA polymerase II-dependent transcription. The SRB8-11 complex may be involved in the transcriptional repression of a subset of genes regulated by Mediator. It may inhibit the association of the Mediator complex with RNA polymerase II to form the holoenzyme complex. The protein is Mediator of RNA polymerase II transcription subunit 12 (SRB8) of Yarrowia lipolytica (strain CLIB 122 / E 150) (Yeast).